A 254-amino-acid chain; its full sequence is Cytokine-inducible SH2-containing protein (254 aa).

Residues 82 to 188 (WYWGSITASE…ATTPALPTPK (107 aa)) form the SH2 domain. Positions 171–195 (TRSDSPDLATTPALPTPKEDAPGDP) are disordered. The SOCS box domain occupies 205-253 (KLVQPFVRRSSTRSLQHLCRLVINRLVVDVDCLPLPRRMADYLRQYPFQ).

In terms of assembly, stably associated with the tyrosine-phosphorylated IL3 receptor beta chain and tyrosine-phosphorylated EPO receptor (EPOR).

It functions in the pathway protein modification; protein ubiquitination. Functionally, SOCS family proteins form part of a classical negative feedback system that regulates cytokine signal transduction. CIS is involved in the negative regulation of cytokines that signal through the JAK-STAT5 pathway such as erythropoietin, prolactin and interleukin 3 (IL3) receptor. Inhibits STAT5 trans-activation by suppressing its tyrosine phosphorylation. May be a substrate recognition component of a SCF-like ECS (Elongin BC-CUL2/5-SOCS-box protein) E3 ubiquitin-protein ligase complex which mediates the ubiquitination and subsequent proteasomal degradation of target proteins. The polypeptide is Cytokine-inducible SH2-containing protein (CISH) (Bos taurus (Bovine)).